A 282-amino-acid polypeptide reads, in one-letter code: Putative hydrolase Bcenmc03_4750 (282 aa).

Residues Glu-124, Glu-126, and Asp-155 each contribute to the Mg(2+) site.

It belongs to the FAH family. The cofactor is Mg(2+).

The chain is Putative hydrolase Bcenmc03_4750 from Burkholderia orbicola (strain MC0-3).